A 668-amino-acid polypeptide reads, in one-letter code: DNA damage-responsive serine/threonine-protein kinase RqkA (668 aa).

In terms of domain architecture, Protein kinase spans 13–272 (YELLALLGEG…SGAALAHLWA (260 aa)). Residues 19–27 (LGEGGSAQV) and lysine 42 each bind ATP. Aspartate 137 acts as the Proton acceptor in catalysis.

Belongs to the protein kinase superfamily. Ser/Thr protein kinase family. Requires pyrroloquinoline quinone as cofactor. Autophosphorylated.

It catalyses the reaction L-seryl-[protein] + ATP = O-phospho-L-seryl-[protein] + ADP + H(+). The catalysed reaction is L-threonyl-[protein] + ATP = O-phospho-L-threonyl-[protein] + ADP + H(+). Its activity is regulated as follows. Autokinase activity is stimulated by DNA damage. Stimulated by PQQ and DNA ends in vitro. Plays an important role in radiation resistance and DNA double-strand break (DSB) repair. Involved in transcriptional regulation of genes important for bacterial stress response. Phosphorylates PprA in vitro. The protein is DNA damage-responsive serine/threonine-protein kinase RqkA (rqkA) of Deinococcus radiodurans (strain ATCC 13939 / DSM 20539 / JCM 16871 / CCUG 27074 / LMG 4051 / NBRC 15346 / NCIMB 9279 / VKM B-1422 / R1).